The chain runs to 326 residues: DNA repair protein RAD51 homolog 4 (326 aa).

Positions 1–83 are preferentially binds ssDNA; it reads MGVLRAGLCP…ELKTSTAILS (83 aa). Position 107–114 (107–114) interacts with ATP; the sequence is GAPGSGKT.

Belongs to the RecA family. RAD51 subfamily. As to quaternary structure, part of the BCDX2 complex consisting of RAD51B, RAD51C, RAD51D and XRCC2; the complex has a ring-like structure arranged into a flat disc around a central channel. In the absence of DNA, the BCDX2 subcomplex XRCC2:RAD51D formed a multimeric ring structure; in the presence of single-stranded DNA it formed a filamentous structure with the ssDNA. Interacts with SWSAP1 and ZSWIM7; involved in homologous recombination repair. Interacts with BLM; required for stimulation of BLM activity by the BCDX2 subcomplex XRCC2:RAD51D.

The protein resides in the nucleus. Functionally, involved in the homologous recombination repair (HRR) pathway of double-stranded DNA breaks arising during DNA replication or induced by DNA-damaging agents. Bind to single-stranded DNA (ssDNA) and has DNA-dependent ATPase activity. Part of the RAD51 paralog protein complex BCDX2 which acts in the BRCA1-BRCA2-dependent HR pathway. Upon DNA damage, BCDX2 acts downstream of BRCA2 recruitment and upstream of RAD51 recruitment. BCDX2 binds predominantly to the intersection of the four duplex arms of the Holliday junction and to junction of replication forks. The BCDX2 complex was originally reported to bind single-stranded DNA, single-stranded gaps in duplex DNA and specifically to nicks in duplex DNA. Involved in telomere maintenance. The BCDX2 subcomplex XRCC2:RAD51D can stimulate Holliday junction resolution by BLM. The chain is DNA repair protein RAD51 homolog 4 (RAD51D) from Bos taurus (Bovine).